The primary structure comprises 258 residues: MLVLYGHSTQDVPETNARVVGGTEARRNSWPSQISLQYLSGGKWYHTCGGTLIRQNWVMTAAHCVDRTMTFRVVIGEHNLSQNDGTEQSASVQKIVVHPYWNSNDVSAGYDIALLRLAQKVTLNSYVQLGVLPQEGAILANNSPCYITGWGLTKTNGQLAQVLQQAYLPTVDYAICSSSSYWGSIVKKSMVCAGGDGIRSGCQGDSGGPLHCSVNGKYTVHGVTSFVSSLGCNVSRKPTVFTRVSAYITWINNVIASN.

A signal peptide spans 1–8 (MLVLYGHS). A propeptide spans 9-18 (TQDVPETNAR) (activation peptide). Positions 19 to 256 (VVGGTEARRN…YITWINNVIA (238 aa)) constitute a Peptidase S1 domain. The cysteines at positions 48 and 64 are disulfide-linked. H63 serves as the catalytic Charge relay system. Residues E77, N79, Q82, and E87 each contribute to the Ca(2+) site. N79 carries an N-linked (GlcNAc...) asparagine glycan. D111 acts as the Charge relay system in catalysis. 3 disulfides stabilise this stretch: C145–C212, C176–C192, and C202–C232. The active-site Charge relay system is S206. N233 carries an N-linked (GlcNAc...) asparagine glycan.

This sequence belongs to the peptidase S1 family. Elastase subfamily. Requires Ca(2+) as cofactor.

The protein resides in the secreted. It carries out the reaction Hydrolysis of proteins, including elastin. Preferential cleavage: Ala-|-Xaa.. Serine proteases that hydrolyze many proteins in addition to elastin. The protein is Chymotrypsin-like elastase family member 1 (CELA1) of Canis lupus familiaris (Dog).